Consider the following 390-residue polypeptide: Neuromedin-B receptor (390 aa).

The Extracellular segment spans residues methionine 1–valine 41. Asparagine 8 and asparagine 16 each carry an N-linked (GlcNAc...) asparagine glycan. The chain crosses the membrane as a helical span at residues isoleucine 42–valine 65. At lysine 66–asparagine 79 the chain is on the cytoplasmic side. The chain crosses the membrane as a helical span at residues isoleucine 80–valine 99. The Extracellular portion of the chain corresponds to aspartate 100 to lysine 117. The cysteines at positions 116 and 198 are disulfide-linked. Residues leucine 118–alanine 139 traverse the membrane as a helical segment. Over aspartate 140–valine 156 the chain is Cytoplasmic. Residues leucine 157 to proline 177 traverse the membrane as a helical segment. Topologically, residues glutamate 178–isoleucine 211 are extracellular. N-linked (GlcNAc...) asparagine glycosylation is present at asparagine 192. Residues histidine 212–isoleucine 235 form a helical membrane-spanning segment. The Cytoplasmic portion of the chain corresponds to alanine 236–lysine 266. The helical transmembrane segment at isoleucine 267–leucine 287 threads the bilayer. Residues tyrosine 288 to serine 299 lie on the Extracellular side of the membrane. Residues leucine 300–leucine 327 form a helical membrane-spanning segment. At serine 328 to leucine 390 the chain is on the cytoplasmic side. Residue cysteine 341 is the site of S-palmitoyl cysteine attachment. At serine 352 the chain carries Phosphoserine.

It belongs to the G-protein coupled receptor 1 family. As to expression, expressed in a subset of neurons of the pre-Botzinger complex. Within the pre-Botzinger complex, there is some overlap with neurons expressing Grpr with some cells expressing only Grpr or Nmbr while some cells express both. Expressed in dorsal root ganglion neurons and mast cells. Expressed in lung.

Its subcellular location is the cell membrane. Functionally, receptor for neuromedin-B. Contributes to the maintenance of basal sigh rate through signaling in the pre-Botzinger complex, a cluster of several thousand neurons in the ventrolateral medulla responsible for inspiration during respiratory activity. Contributes to the induction of sneezing following exposure to chemical irritants or allergens which causes release of NMB by nasal sensory neurons and activation of NMBR-expressing neurons in the sneeze-evoking region of the brainstem. These in turn activate neurons of the caudal ventral respiratory group, giving rise to the sneezing response. Contributes to induction of acute itch, possibly through its activation on dorsal root ganglion neurons by the NMB peptide. Plays a role in the innate immune response to influenza A virus infection by enhancing interferon alpha expression and reducing expression of IL6. Plays a role in CSF1-induced proliferation of osteoclast precursors by contributing to the positive regulation of the expression of the CSF1 receptor CSF1R. In Mus musculus (Mouse), this protein is Neuromedin-B receptor (Nmbr).